Consider the following 216-residue polypeptide: Orotidine 5'-phosphate decarboxylase (216 aa).

Substrate is bound by residues Asp-12, Lys-34, 62-71 (DFKVADIDAT), Ser-119, 172-182 (PGVGFQGGNAK), Gly-194, and Arg-195. Residue Lys-64 is the Proton donor of the active site.

The protein belongs to the OMP decarboxylase family. Type 1 subfamily. As to quaternary structure, homodimer.

The catalysed reaction is orotidine 5'-phosphate + H(+) = UMP + CO2. Its pathway is pyrimidine metabolism; UMP biosynthesis via de novo pathway; UMP from orotate: step 2/2. Catalyzes the decarboxylation of orotidine 5'-monophosphate (OMP) to uridine 5'-monophosphate (UMP). The chain is Orotidine 5'-phosphate decarboxylase from Methanosphaera stadtmanae (strain ATCC 43021 / DSM 3091 / JCM 11832 / MCB-3).